Consider the following 437-residue polypeptide: Enolase (437 aa).

Gln166 contacts (2R)-2-phosphoglycerate. Catalysis depends on Glu208, which acts as the Proton donor. Asp245, Glu295, and Asp322 together coordinate Mg(2+). (2R)-2-phosphoglycerate is bound by residues Lys347, Arg376, Ser377, and Lys398. Residue Lys347 is the Proton acceptor of the active site.

It belongs to the enolase family. The cofactor is Mg(2+).

Its subcellular location is the cytoplasm. It is found in the secreted. The protein resides in the cell surface. It catalyses the reaction (2R)-2-phosphoglycerate = phosphoenolpyruvate + H2O. It participates in carbohydrate degradation; glycolysis; pyruvate from D-glyceraldehyde 3-phosphate: step 4/5. In terms of biological role, catalyzes the reversible conversion of 2-phosphoglycerate (2-PG) into phosphoenolpyruvate (PEP). It is essential for the degradation of carbohydrates via glycolysis. This chain is Enolase, found in Lachnoclostridium phytofermentans (strain ATCC 700394 / DSM 18823 / ISDg) (Clostridium phytofermentans).